The sequence spans 904 residues: DNA mismatch repair protein MutS (904 aa).

655–662 is a binding site for ATP; sequence GPNMGGKS.

Belongs to the DNA mismatch repair MutS family.

In terms of biological role, this protein is involved in the repair of mismatches in DNA. It is possible that it carries out the mismatch recognition step. This protein has a weak ATPase activity. The polypeptide is DNA mismatch repair protein MutS (Rhizorhabdus wittichii (strain DSM 6014 / CCUG 31198 / JCM 15750 / NBRC 105917 / EY 4224 / RW1) (Sphingomonas wittichii)).